We begin with the raw amino-acid sequence, 252 residues long: Probable endonuclease 4 (252 aa).

Zn(2+) is bound by residues histidine 56, histidine 96, glutamate 129, aspartate 162, histidine 165, histidine 191, aspartate 204, histidine 206, and glutamate 233.

The protein belongs to the AP endonuclease 2 family. Requires Zn(2+) as cofactor.

The enzyme catalyses Endonucleolytic cleavage to 5'-phosphooligonucleotide end-products.. Functionally, endonuclease IV plays a role in DNA repair. It cleaves phosphodiester bonds at apurinic or apyrimidinic (AP) sites, generating a 3'-hydroxyl group and a 5'-terminal sugar phosphate. This Mycobacterium tuberculosis (strain ATCC 25177 / H37Ra) protein is Probable endonuclease 4.